The sequence spans 111 residues: Auxin-repressed 12.5 kDa protein (111 aa).

Positions 18–111 are disordered; sequence ERGLGMLRKV…SGETRSKHHR (94 aa). A compositionally biased stretch (low complexity) spans 43–57; sequence TMPTTPTTPVTPTTP. The segment covering 74-95 has biased composition (polar residues); the sequence is SNLSSKTMGNQVFDSPQPNSPT.

Belongs to the DRM1/ARP family.

This is Auxin-repressed 12.5 kDa protein from Fragaria ananassa (Strawberry).